The sequence spans 210 residues: LexA repressor (210 aa).

Residues 29–49 constitute a DNA-binding region (H-T-H motif); the sequence is VREIGEAVDLSSTSTVHGHIS. Catalysis depends on for autocatalytic cleavage activity residues S130 and K168.

Belongs to the peptidase S24 family. As to quaternary structure, homodimer.

The enzyme catalyses Hydrolysis of Ala-|-Gly bond in repressor LexA.. Its function is as follows. Represses a number of genes involved in the response to DNA damage (SOS response), including recA and lexA. In the presence of single-stranded DNA, RecA interacts with LexA causing an autocatalytic cleavage which disrupts the DNA-binding part of LexA, leading to derepression of the SOS regulon and eventually DNA repair. This is LexA repressor from Lactiplantibacillus plantarum (strain ATCC BAA-793 / NCIMB 8826 / WCFS1) (Lactobacillus plantarum).